Here is an 85-residue protein sequence, read N- to C-terminus: Defensin-like protein 11 (85 aa).

An N-terminal signal peptide occupies residues 1–29 (MGKTISFSAIILVFLLVSTGLMKQGDAQA). Disulfide bonds link Cys32–Cys84, Cys44–Cys68, Cys54–Cys75, and Cys58–Cys77.

The protein belongs to the DEFL family.

It localises to the secreted. In Arabidopsis thaliana (Mouse-ear cress), this protein is Defensin-like protein 11.